The sequence spans 214 residues: Refilin-B (214 aa).

Positions 1-56 are disordered; that stretch reads MVGRLSLQDVPELVDAKKKGDGVLDSPDSGLPPSPSPSHWGLAAGGGGGERAAAPG. Residues serine 6 and serine 26 each carry the phosphoserine modification.

Belongs to the Refilin family. As to quaternary structure, interacts with FLNA and FLNB.

It localises to the cytoplasm. Its subcellular location is the cytoskeleton. In terms of biological role, involved in the regulation of the perinuclear actin network and nuclear shape through interaction with filamins. Plays an essential role in the formation of cartilaginous skeletal elements. The sequence is that of Refilin-B from Homo sapiens (Human).